A 243-amino-acid chain; its full sequence is 7-carboxy-7-deazaguanine synthase (243 aa).

Residues 9–11 (IMG) and Arg-24 contribute to the substrate site. Residues 15 to 243 (YIGRRFIFVR…IQMHKYLGML (229 aa)) enclose the Radical SAM core domain. Residues Cys-28, Cys-32, and Cys-35 each contribute to the [4Fe-4S] cluster site. Thr-84 is a substrate binding site. Gly-86 contacts S-adenosyl-L-methionine.

Belongs to the radical SAM superfamily. 7-carboxy-7-deazaguanine synthase family. Homodimer. The cofactor is [4Fe-4S] cluster. S-adenosyl-L-methionine is required as a cofactor. Mg(2+) serves as cofactor.

The catalysed reaction is 6-carboxy-5,6,7,8-tetrahydropterin + H(+) = 7-carboxy-7-deazaguanine + NH4(+). The protein operates within purine metabolism; 7-cyano-7-deazaguanine biosynthesis. Functionally, catalyzes the complex heterocyclic radical-mediated conversion of 6-carboxy-5,6,7,8-tetrahydropterin (CPH4) to 7-carboxy-7-deazaguanine (CDG), a step common to the biosynthetic pathways of all 7-deazapurine-containing compounds. The protein is 7-carboxy-7-deazaguanine synthase of Methanocaldococcus jannaschii (strain ATCC 43067 / DSM 2661 / JAL-1 / JCM 10045 / NBRC 100440) (Methanococcus jannaschii).